Consider the following 204-residue polypeptide: Inactive ribonuclease-like protein 9 (204 aa).

An N-terminal signal peptide occupies residues 1-26 (MMRTLITTHPLLLLLLLQQLLQPVQL). 3 cysteine pairs are disulfide-bonded: Cys97–Cys152, Cys115–Cys167, and Cys122–Cys129. 2 N-linked (GlcNAc...) asparagine glycosylation sites follow: Asn130 and Asn142.

Belongs to the pancreatic ribonuclease family.

The protein resides in the secreted. In terms of biological role, does not exhibit any ribonuclease activity. This Chlorocebus aethiops (Green monkey) protein is Inactive ribonuclease-like protein 9 (RNASE9).